An 885-amino-acid chain; its full sequence is Protein transport protein SEC24-1 (885 aa).

The Zn(2+) site is built by C164, C167, C186, and C189. The zinc finger-like stretch occupies residues 164–189 (CRRCRSYLNPFVAFIEQGRRWQCNIC). A disordered region spans residues 296–332 (DDYEESDDDDDEDDDDEEEDNEEEEEEEEDEEDDDDS).

This sequence belongs to the SEC23/SEC24 family. SEC24 subfamily. In terms of assembly, the COPII coat is composed of at least 5 proteins: the SEC23/24 complex, the SEC13/31 complex, and the protein SAR1. Golgi apparatus membrane; Peripheral membrane protein; Cytoplasmic side.

It localises to the cytoplasm. It is found in the cytoplasmic vesicle. The protein resides in the COPII-coated vesicle membrane. The protein localises to the endoplasmic reticulum membrane. Its subcellular location is the golgi apparatus membrane. Functionally, component of the coat protein complex II (COPII) which promotes the formation of transport vesicles from the endoplasmic reticulum (ER). The coat has two main functions, the physical deformation of the endoplasmic reticulum membrane into vesicles and the selection of cargo molecules. The sequence is that of Protein transport protein SEC24-1 (SEC241) from Saccharomyces uvarum (strain ATCC 76518 / CBS 7001 / CLIB 283 / NBRC 10550 / MCYC 623 / NCYC 2669 / NRRL Y-11845) (Yeast).